The sequence spans 46 residues: Putative antitoxin VapB3 (46 aa).

Belongs to the UPF0165 family.

Functionally, possibly the antitoxin component of a type II toxin-antitoxin (TA) system. Its cognate toxin is VapC3 (Potential). The sequence is that of Putative antitoxin VapB3 (vapB3) from Pyrococcus furiosus (strain ATCC 43587 / DSM 3638 / JCM 8422 / Vc1).